The primary structure comprises 1822 residues: Signal-induced proliferation-associated 1-like protein 1 (1822 aa).

Disordered stretches follow at residues 1-30 (MTSLKRSQTERPVTADRASVVSTDGTPKVH) and 47-125 (GSSV…VSLN). Over residues 84–94 (PPRKENVKESS) the composition is skewed to basic and acidic residues. Low complexity predominate over residues 95–125 (RSSQEIETSSCLESLSSKGSPVSQGSSVSLN). Residues serine 162, serine 187, serine 193, serine 208, serine 255, and serine 288 each carry the phosphoserine modification. The segment at 277 to 297 (EREKPLKRRSKSETGDSSIFR) is disordered. Residues 638–855 (FMKLDEQGLN…RTRQEYLKDL (218 aa)) enclose the Rap-GAP domain. The PDZ domain occupies 992-1068 (EMTLRRNGLG…VKVVIIPPHD (77 aa)). Phosphoserine occurs at positions 1117, 1126, 1155, 1166, 1188, 1209, and 1220. A disordered region spans residues 1134 to 1165 (AGKGDGKMPLPERAANIPRSISSDGRPLERRL). The interval 1183 to 1252 (SQCRNSPSNL…WQRSEDSLAD (70 aa)) is disordered. The segment covering 1188–1198 (SPSNLSSSSET) has biased composition (low complexity). Positions 1225 to 1244 (DRQNTQSDIGGSGKSTPSWQ) are enriched in polar residues. Residues serine 1273 and serine 1288 each carry the phosphoserine modification. Residues 1286–1324 (HLSPNKQGHSDSHYSSHSSSNTLSSNASSAHSDEKWYDG) are disordered. Over residues 1300 to 1315 (SSHSSSNTLSSNASSA) the composition is skewed to low complexity. The residue at position 1344 (serine 1344) is a Phosphoserine; by PLK2. Phosphothreonine; by PLK2 is present on threonine 1348. The span at 1358-1367 (TASLGASTSS) shows a compositional bias: low complexity. The segment at 1358–1382 (TASLGASTSSPRSGPGKEKVAPLWH) is disordered. Serine 1367 is subject to Phosphoserine; by CDK5. The residue at position 1384 (serine 1384) is a Phosphoserine. The span at 1395–1407 (LETEGHGMDRKTE) shows a compositional bias: basic and acidic residues. The interval 1395–1493 (LETEGHGMDR…SSSGPRTFYP (99 aa)) is disordered. Phosphoserine occurs at positions 1408, 1409, 1430, 1449, and 1451. Positions 1417 to 1436 (KSQGGSSPLTRENSTFSIND) are enriched in polar residues. Composition is skewed to low complexity over residues 1437–1451 (ATSHTSTMSSRHSAS) and 1471–1486 (SSQLAPSFSSSSSSSS). A phosphoserine mark is found at serine 1546 and serine 1567. A disordered region spans residues 1567–1595 (SPTPESQKNFKFHGLSSPQSPFPSTPTSR). Phosphothreonine is present on threonine 1569. Residues serine 1572, serine 1583, serine 1586, serine 1603, and serine 1606 each carry the phosphoserine modification. Arginine 1619 is subject to Asymmetric dimethylarginine. Serine 1621, serine 1665, serine 1668, serine 1726, serine 1729, serine 1746, serine 1747, and serine 1752 each carry phosphoserine. Residues 1753–1813 (PTLASKVDQL…ASDKLKKFTE (61 aa)) are a coiled coil.

As to quaternary structure, interacts (via PDZ domain) with EPHA4 (via PDZ motif); controls neuronal morphology through regulation of the RAP1 (RAP1A or RAP1B) and RAP2 (RAP2A, RAP2B or RAP2C) GTPases. Interacts with DLG4, PDLIM5, PDLIM7 and LZTS3. Interacts with the actin cytoskeleton. Post-translationally, ubiquitinated and degraded by the SCF(BTRC) following phosphorylation by PLK2. In terms of processing, phosphorylated at Ser-1367 by CDK5, creating a docking site for the POLO box domains of PLK2. Subsequently, PLK2 binds and phosphorylates SIPA1L1, leading to ubiquitination and degradation by the proteasome. In terms of tissue distribution, detected in brain (at protein level).

The protein resides in the cytoplasm. It localises to the cytoskeleton. Its subcellular location is the postsynaptic density. The protein localises to the synapse. It is found in the synaptosome. Stimulates the GTPase activity of RAP2A. Promotes reorganization of the actin cytoskeleton and recruits DLG4 to F-actin. Contributes to the regulation of dendritic spine morphogenesis. This Rattus norvegicus (Rat) protein is Signal-induced proliferation-associated 1-like protein 1 (Sipa1l1).